The chain runs to 621 residues: Type 2 DNA topoisomerase 6 subunit B (621 aa).

ATP is bound by residues Asn-48, Asp-80, 101 to 102 (SR), 111 to 118 (GQQGIGIS), and Lys-435.

This sequence belongs to the TOP6B family. As to quaternary structure, homodimer. Heterotetramer of two Top6A and two Top6B chains.

The catalysed reaction is ATP-dependent breakage, passage and rejoining of double-stranded DNA.. Relaxes both positive and negative superturns and exhibits a strong decatenase activity. This Methanosarcina acetivorans (strain ATCC 35395 / DSM 2834 / JCM 12185 / C2A) protein is Type 2 DNA topoisomerase 6 subunit B.